The primary structure comprises 469 residues: Histone chaperone rtt-106 (469 aa).

Disordered stretches follow at residues 54–73 (EEPA…PNGA) and 364–469 (MAEQ…EGEE). Composition is skewed to basic and acidic residues over residues 364 to 379 (MAEQ…ENAK) and 402 to 415 (ELER…QRLQ). Acidic residues-rich tracts occupy residues 416 to 433 (DEED…EGES) and 440 to 469 (SEEE…EGEE).

The protein belongs to the RTT106 family. As to quaternary structure, interacts with histones H3 and H4.

The protein resides in the nucleus. It localises to the chromosome. Functionally, histones H3 and H4 chaperone involved in the nucleosome formation and heterochromatin silencing. Required for the deposition of H3K56ac-carrying H3-H4 complex onto newly-replicated DNA. Plays a role in the transcriptional regulation of the cell-cycle dependent histone genes by creating a repressive structure at the core histone gene promoter. This Neurospora crassa (strain ATCC 24698 / 74-OR23-1A / CBS 708.71 / DSM 1257 / FGSC 987) protein is Histone chaperone rtt-106 (rtt-106).